The chain runs to 393 residues: NAD(P)H-quinone oxidoreductase subunit H, chloroplastic (393 aa).

The protein belongs to the complex I 49 kDa subunit family. NDH is composed of at least 16 different subunits, 5 of which are encoded in the nucleus.

The protein localises to the plastid. It is found in the chloroplast thylakoid membrane. It carries out the reaction a plastoquinone + NADH + (n+1) H(+)(in) = a plastoquinol + NAD(+) + n H(+)(out). It catalyses the reaction a plastoquinone + NADPH + (n+1) H(+)(in) = a plastoquinol + NADP(+) + n H(+)(out). Its function is as follows. NDH shuttles electrons from NAD(P)H:plastoquinone, via FMN and iron-sulfur (Fe-S) centers, to quinones in the photosynthetic chain and possibly in a chloroplast respiratory chain. The immediate electron acceptor for the enzyme in this species is believed to be plastoquinone. Couples the redox reaction to proton translocation, and thus conserves the redox energy in a proton gradient. The sequence is that of NAD(P)H-quinone oxidoreductase subunit H, chloroplastic from Oenothera biennis (German evening primrose).